The chain runs to 617 residues: Protelomerase (617 aa).

4 residues coordinate DNA: arginine 270, lysine 295, arginine 376, and histidine 409. Tyrosine 418 acts as the Nucleophile in catalysis. The segment covering 535-562 (DAEEDEIEEDFTDEEIDDTEFDVSDNAS) has biased composition (acidic residues). The disordered stretch occupies residues 535–575 (DAEEDEIEEDFTDEEIDDTEFDVSDNASDEDKPEDKPRFAA). Positions 563 to 575 (DEDKPEDKPRFAA) are enriched in basic and acidic residues.

Belongs to the Caudoviricetes Protelomerase family. In terms of assembly, monomer. Homodimer; in presence of DNA.

Functionally, converts the circular intermediates produced by the viral replication and carrying a joined telomere site to a linear DNA molecule with covalently closed hairpin ends. The viral circular DNA is cleaved at a palindromic site called telRL thereby generating a linear prophage plasmid with telomeres. Binds covalently to the 3'-phosphoryl of the cleaved strands. This chain is Protelomerase (tel), found in Yersinia enterocolitica (Bacteriophage PY54).